The sequence spans 599 residues: Elongation factor 4 (599 aa).

Positions 2-184 constitute a tr-type G domain; it reads KNIRNFSIIA…RLVRDIPPPE (183 aa). Residues 14–19 and 131–134 contribute to the GTP site; these read DHGKST and NKID.

The protein belongs to the TRAFAC class translation factor GTPase superfamily. Classic translation factor GTPase family. LepA subfamily.

It localises to the cell inner membrane. It carries out the reaction GTP + H2O = GDP + phosphate + H(+). Its function is as follows. Required for accurate and efficient protein synthesis under certain stress conditions. May act as a fidelity factor of the translation reaction, by catalyzing a one-codon backward translocation of tRNAs on improperly translocated ribosomes. Back-translocation proceeds from a post-translocation (POST) complex to a pre-translocation (PRE) complex, thus giving elongation factor G a second chance to translocate the tRNAs correctly. Binds to ribosomes in a GTP-dependent manner. In Shigella dysenteriae serotype 1 (strain Sd197), this protein is Elongation factor 4.